A 73-amino-acid chain; its full sequence is Protein DSS1 HOMOLOG ON CHROMOSOME V (73 aa).

The protein belongs to the DSS1/SEM1 family. Part of the 26S proteasome. Interacts with BRCA2B. Interacts with EER5. Interacts with UCH1 and UCH2.

Its function is as follows. Subunit of the 26S proteasome which plays a role in ubiquitin-dependent proteolysis. Also associates with the TREX-2 complex that is required for transcription-coupled mRNA export. This Arabidopsis thaliana (Mouse-ear cress) protein is Protein DSS1 HOMOLOG ON CHROMOSOME V.